We begin with the raw amino-acid sequence, 37 residues long: Large ribosomal subunit protein bL36c (37 aa).

This sequence belongs to the bacterial ribosomal protein bL36 family.

Its subcellular location is the plastid. It localises to the chloroplast. The protein is Large ribosomal subunit protein bL36c of Ostreococcus tauri.